Here is a 139-residue protein sequence, read N- to C-terminus: MLSPRRTKFRKQQRGRMRGLAERGSTLNFGDYALQATEPCWITSRQIEAARRAMTRYIRRGGKIWIRIFPDKPVTMRPAETRMGSGKGSPEYWVAVVKPGRVMFELAGVSEEVAREAMRLAAQKLPIKTKFISRQEDYI.

The protein belongs to the universal ribosomal protein uL16 family. Part of the 50S ribosomal subunit.

Its function is as follows. Binds 23S rRNA and is also seen to make contacts with the A and possibly P site tRNAs. This Synechocystis sp. (strain ATCC 27184 / PCC 6803 / Kazusa) protein is Large ribosomal subunit protein uL16.